The following is a 197-amino-acid chain: Holliday junction branch migration complex subunit RuvA (197 aa).

The domain I stretch occupies residues 1–64 (MIASVRGTLI…EDALTLYGFK (64 aa)). The interval 65-145 (TVEQRQLFET…GLPVAPGVSP (81 aa)) is domain II. The tract at residues 146–153 (AVAAVNAE) is flexible linker. Residues 153 to 197 (ELSEMLVSLGFSSAEASTAIAALPPDAPLDLEERLRLALRYFGAR) form a domain III region.

It belongs to the RuvA family. As to quaternary structure, homotetramer. Forms an RuvA(8)-RuvB(12)-Holliday junction (HJ) complex. HJ DNA is sandwiched between 2 RuvA tetramers; dsDNA enters through RuvA and exits via RuvB. An RuvB hexamer assembles on each DNA strand where it exits the tetramer. Each RuvB hexamer is contacted by two RuvA subunits (via domain III) on 2 adjacent RuvB subunits; this complex drives branch migration. In the full resolvosome a probable DNA-RuvA(4)-RuvB(12)-RuvC(2) complex forms which resolves the HJ.

The protein localises to the cytoplasm. Its function is as follows. The RuvA-RuvB-RuvC complex processes Holliday junction (HJ) DNA during genetic recombination and DNA repair, while the RuvA-RuvB complex plays an important role in the rescue of blocked DNA replication forks via replication fork reversal (RFR). RuvA specifically binds to HJ cruciform DNA, conferring on it an open structure. The RuvB hexamer acts as an ATP-dependent pump, pulling dsDNA into and through the RuvAB complex. HJ branch migration allows RuvC to scan DNA until it finds its consensus sequence, where it cleaves and resolves the cruciform DNA. The polypeptide is Holliday junction branch migration complex subunit RuvA (Roseiflexus castenholzii (strain DSM 13941 / HLO8)).